Here is a 277-residue protein sequence, read N- to C-terminus: ILVDAQGRRFMTALDPAAELAPRDVVTRGVAAAIKAGKGAFLDARTALGAAFPQAFPTVYAACRASGIDPVRQPIPIAPAAHYHMGGVLTDSFGRTSIDGLWAVGEVACTGAHGANRLASNSLLEAVVFAARVAGDVGAAPLRRGWPPPAPPDLSPRPPPAEDAAAITRLRATMSARVGVIRDGQGLESALATIETIAAGARSPRLRAMTTAARLITAAALARRESRGAHFRADYPATDPAQSHRATAPFGPLRTVPPHPAQSLGEGLAAPPMETRS.

Residue Arg-23 is the Proton donor/acceptor of the active site. FAD-binding positions include Glu-106 and 122–123 (SL). Disordered stretches follow at residues 142 to 161 (LRRGWPPPAPPDLSPRPPPA) and 234 to 277 (DYPA…ETRS). Positions 146–161 (WPPPAPPDLSPRPPPA) are enriched in pro residues.

This sequence belongs to the FAD-dependent oxidoreductase 2 family. NadB subfamily. FAD serves as cofactor.

Its subcellular location is the cytoplasm. The enzyme catalyses L-aspartate + O2 = iminosuccinate + H2O2. It participates in cofactor biosynthesis; NAD(+) biosynthesis; iminoaspartate from L-aspartate (oxidase route): step 1/1. Catalyzes the oxidation of L-aspartate to iminoaspartate, the first step in the de novo biosynthesis of NAD(+). The sequence is that of L-aspartate oxidase (nadB) from Rhodospirillum rubrum.